The following is a 295-amino-acid chain: UDP-N-acetylenolpyruvoylglucosamine reductase (295 aa).

The region spanning 24 to 188 (KVGGNAEIFF…LKVVFKINKG (165 aa)) is the FAD-binding PCMH-type domain. The active site involves arginine 168. Serine 217 (proton donor) is an active-site residue. Residue glutamate 287 is part of the active site.

It belongs to the MurB family. Requires FAD as cofactor.

It is found in the cytoplasm. It carries out the reaction UDP-N-acetyl-alpha-D-muramate + NADP(+) = UDP-N-acetyl-3-O-(1-carboxyvinyl)-alpha-D-glucosamine + NADPH + H(+). It functions in the pathway cell wall biogenesis; peptidoglycan biosynthesis. Its function is as follows. Cell wall formation. This Rickettsia peacockii (strain Rustic) protein is UDP-N-acetylenolpyruvoylglucosamine reductase.